The primary structure comprises 443 residues: Deoxyguanosinetriphosphate triphosphohydrolase-like protein (443 aa).

The 194-residue stretch at 66–259 (RLTHSLEAAQ…MELADDIAYG (194 aa)) folds into the HD domain.

This sequence belongs to the dGTPase family. Type 2 subfamily.

This chain is Deoxyguanosinetriphosphate triphosphohydrolase-like protein, found in Vibrio vulnificus (strain CMCP6).